A 95-amino-acid chain; its full sequence is Co-chaperonin GroES (95 aa).

This sequence belongs to the GroES chaperonin family. As to quaternary structure, heptamer of 7 subunits arranged in a ring. Interacts with the chaperonin GroEL.

Its subcellular location is the cytoplasm. Its function is as follows. Together with the chaperonin GroEL, plays an essential role in assisting protein folding. The GroEL-GroES system forms a nano-cage that allows encapsulation of the non-native substrate proteins and provides a physical environment optimized to promote and accelerate protein folding. GroES binds to the apical surface of the GroEL ring, thereby capping the opening of the GroEL channel. The protein is Co-chaperonin GroES of Oleidesulfovibrio alaskensis (strain ATCC BAA-1058 / DSM 17464 / G20) (Desulfovibrio alaskensis).